The following is a 321-amino-acid chain: uncharacterized protein (321 aa).

The next 10 membrane-spanning stretches (helical) occupy residues 6–26, 37–57, 72–92, 100–120, 134–154, 160–180, 196–216, 223–243, 255–275, and 277–297; these read LFIG…MFPV, FYFS…LLLV, WIIL…FLGQ, IMTA…ILWG, ILIA…SFFF, LFSI…TMGG, CLFG…QGYV, VIAA…IIAL, SING…IMVI, and GYNI…GLIL. 2 EamA domains span residues 18–146 and 175–300; these read MSWG…MVIT and VYTM…LNNI.

Belongs to the EamA transporter family.

The protein localises to the cell membrane. This is an uncharacterized protein from Bacillus subtilis (strain 168).